A 152-amino-acid chain; its full sequence is Transcription elongation factor Spt5 (152 aa).

In terms of domain architecture, KOW spans 99 to 128 (PGDVVEVISGPFRGTQAQVIRVEEAKGEVV).

This sequence belongs to the archaeal Spt5 family. In terms of assembly, heterodimer composed of Spt4 and Spt5. Interacts with RNA polymerase (RNAP).

Functionally, stimulates transcription elongation. This Saccharolobus solfataricus (strain ATCC 35092 / DSM 1617 / JCM 11322 / P2) (Sulfolobus solfataricus) protein is Transcription elongation factor Spt5.